The primary structure comprises 423 residues: Putative competence-damage inducible protein (423 aa).

This sequence belongs to the CinA family.

The protein is Putative competence-damage inducible protein of Streptococcus uberis (strain ATCC BAA-854 / 0140J).